The chain runs to 542 residues: Pre-mRNA-splicing factor 38B (542 aa).

The segment covering 1–12 has biased composition (polar residues); sequence MANNSPALTGNS. The interval 1–24 is disordered; that stretch reads MANNSPALTGNSQPQHQAAAAVVQ. A2 bears the N-acetylalanine mark. Position 5 is a phosphoserine (S5). Residues 13–24 are compositionally biased toward low complexity; the sequence is QPQHQAAAAVVQ. K227 is modified (N6-acetyllysine). The interval 232-542 is disordered; sequence QIKTRPRKIK…KEHKNKDETV (311 aa). A compositionally biased stretch (basic and acidic residues) spans 243–255; the sequence is DGKEGVEEIDRHI. Basic residues predominate over residues 256–284; it reads ERRRSRSPRRSLSPRRSPRRSRSRSHHRD. Residues S288, S290, S318, and S320 each carry the phosphoserine modification. Residues 291 to 327 are compositionally biased toward basic and acidic residues; it reads FDRELEREKERQRLEREAKEREKERRRSRSLDRGLDR. The stretch at 292 to 323 forms a coiled coil; it reads DRELEREKERQRLEREAKEREKERRRSRSLDR. Residues 328–344 are compositionally biased toward basic residues; sequence RRSRSRERHRSRSRSRD. Residues 345–418 show a composition bias toward basic and acidic residues; the sequence is RKGDRRDRDR…DRRHRDDKKE (74 aa). Over residues 419–448 the composition is skewed to basic residues; sequence SKKKHSRSRSRERKHRSRSRSRNAGKRSRS. At S446 the chain carries Phosphoserine. The segment covering 449 to 466 has biased composition (basic and acidic residues); the sequence is RSKDKASKHKNESKEKSN. A phosphoserine mark is found at S471, S473, and S479. 2 stretches are compositionally biased toward basic and acidic residues: residues 479–492 and 499–522; these read SVEK…PSRE and RSQD…DHQR. Phosphoserine is present on residues S523, S525, and S530. Residues 530 to 542 are compositionally biased toward basic and acidic residues; the sequence is SQEKEHKNKDETV.

Belongs to the PRP38 family.

Its subcellular location is the nucleus. Its function is as follows. May be required for pre-mRNA splicing. In Rattus norvegicus (Rat), this protein is Pre-mRNA-splicing factor 38B (Prpf38b).